The following is a 486-amino-acid chain: Ribosomal RNA small subunit methyltransferase F (486 aa).

Residues Ala-124–Lys-130, Glu-148, Asp-175, and Asp-193 each bind S-adenosyl-L-methionine. The Nucleophile role is filled by Cys-246.

Belongs to the class I-like SAM-binding methyltransferase superfamily. RsmB/NOP family.

It localises to the cytoplasm. The catalysed reaction is cytidine(1407) in 16S rRNA + S-adenosyl-L-methionine = 5-methylcytidine(1407) in 16S rRNA + S-adenosyl-L-homocysteine + H(+). Functionally, specifically methylates the cytosine at position 1407 (m5C1407) of 16S rRNA. The polypeptide is Ribosomal RNA small subunit methyltransferase F (Shewanella putrefaciens (strain CN-32 / ATCC BAA-453)).